The following is a 452-amino-acid chain: Gamma conglutin 1 (452 aa).

Positions 1 to 33 (MAKNMAPILHILVISLSYSFLFVTSSSQNSQSL) are cleaved as a signal peptide. Positions 61 to 432 (HWGNILKRTP…DLARSRVGFN (372 aa)) constitute a Peptidase A1 domain. Cystine bridges form between C89/C179, C103/C116, C108/C134, C119/C129, and C353/C394. The N-linked (GlcNAc...) asparagine glycan is linked to N131.

Belongs to the peptidase A1 family. Two-subunit monomeric unit made of alpha and beta subunits coupled by disulfide bonds (at pH 4.5 and under non-reducing conditions). Monomeric alpha and beta subunits in reducing conditions. Can also form oligomers including dimer, tetramer and cyclic hexamer (trimer of dimers) (at pH &gt; 5.5). Component of globulins complexes which accumulate in seeds. Interacts with flavonoids (e.g. apigenin glucosides) present in globulins complexes. Glycosylated on alpha chain at Asn-131; identified N-glycans bound are Man(2)(Xyl)(Fuc)GlcNAc(2), Man(3)(Xyl)(Fuc)GlcNAc(2), GlcNAcMan(3)(Xyl)(Fuc)GlcNAc(2) and GlcNAc(2)Man(3)(Xyl)(Fuc)GlcNAc(2). As to expression, expressed in developing seeds and in the young roots and cotyledons of germinating seeds and young seedlings.

Its subcellular location is the secreted. It is found in the extracellular space. Sulfur-rich seed storage protein that remains undegraded at germination. The uncleaved form exhibits some inhibitory activity against GH11 xylanase from T.longibrachiatum, more at pH 7 than at pH 5.3, but not against GH12 xyloglucan-specific endoglucanase (XEG) from A.aculeatus. Binds to model phospholipid membranes containing dimyristoyl phosphatidylglycerol (DMPG), dioleoyl phosphatidic acid (DOPA) or mixture of dimyristoyl phosphatidylcholine and dimyristoyl phosphatidylglycerol (DMPC:DMPG), or mixture of dioleoyl phosphatidic acid and dioleoyl phosphatidylcholine (DOPC:DOPA). The chain is Gamma conglutin 1 from Lupinus albus (White lupine).